Reading from the N-terminus, the 767-residue chain is RNA cytosine C(5)-methyltransferase NSUN2 (767 aa).

Positions 1-36 (MGRRSRGRRLQQQQRPEDAEDGAEGGGKRGEAGWEG) are disordered. Lys46 participates in a covalent cross-link: Glycyl lysine isopeptide (Lys-Gly) (interchain with G-Cter in SUMO2). Ser139 bears the Phosphoserine; by AURKB mark. S-adenosyl-L-methionine is bound by residues 184-190 (CAAPGSK), Asp215, Asp242, and Asp268. Residue Cys321 is the Nucleophile of the active site. Positions 436 to 481 (NKRQPKLQGKSAETRESTQLSPADLTEGKPTDPSKLESPSFTGTGD) are disordered. Position 456 is a phosphoserine (Ser456). Positions 461 to 470 (TEGKPTDPSK) are enriched in basic and acidic residues. Residues Lys464 and Lys470 each participate in a glycyl lysine isopeptide (Lys-Gly) (interchain with G-Cter in SUMO2) cross-link. Ser473 is modified (phosphoserine). Residues Lys511 and Lys516 each participate in a glycyl lysine isopeptide (Lys-Gly) (interchain with G-Cter in SUMO2) cross-link. Position 586 is an N6-acetyllysine; alternate (Lys586). An N6-malonyllysine; alternate modification is found at Lys586. Lys586 is covalently cross-linked (Glycyl lysine isopeptide (Lys-Gly) (interchain with G-Cter in SUMO2); alternate). Position 593 is a phosphoserine (Ser593). Residues Lys640, Lys654, and Lys660 each participate in a glycyl lysine isopeptide (Lys-Gly) (interchain with G-Cter in SUMO2) cross-link. A Phosphothreonine modification is found at Thr718. The span at 719 to 730 (NESAASTGQPDN) shows a compositional bias: polar residues. A disordered region spans residues 719-767 (NESAASTGQPDNDVTEGQRAGEPNSPDAEEANSPDVTAGCDPAGVHPPR). 3 positions are modified to phosphoserine: Ser724, Ser743, and Ser751.

It belongs to the class I-like SAM-binding methyltransferase superfamily. RsmB/NOP family. TRM4 subfamily. Interacts with NPM1 and NCL during interphase; interaction is disrupted following phosphorylation at Ser-139. In terms of processing, phosphorylated at Ser-139 by AURKB during mitosis, leading to abolish methyltransferase activity and the interaction with NPM1. As to expression, expressed in adult and fetal brain and in lymphoblastoid cells.

The protein localises to the nucleus. It localises to the nucleolus. Its subcellular location is the cytoplasm. The protein resides in the mitochondrion. It is found in the cytoskeleton. The protein localises to the spindle. It localises to the secreted. Its subcellular location is the extracellular exosome. It catalyses the reaction cytidine(48) in tRNA + S-adenosyl-L-methionine = 5-methylcytidine(48) in tRNA + S-adenosyl-L-homocysteine + H(+). It carries out the reaction cytidine(49) in tRNA + S-adenosyl-L-methionine = 5-methylcytidine(49) in tRNA + S-adenosyl-L-homocysteine + H(+). The catalysed reaction is cytidine(50) in tRNA + S-adenosyl-L-methionine = 5-methylcytidine(50) in tRNA + S-adenosyl-L-homocysteine + H(+). The enzyme catalyses cytidine(34) in tRNA precursor + S-adenosyl-L-methionine = 5-methylcytidine(34) in tRNA precursor + S-adenosyl-L-homocysteine + H(+). It catalyses the reaction a cytidine in mRNA + S-adenosyl-L-methionine = a 5-methylcytidine in mRNA + S-adenosyl-L-homocysteine + H(+). With respect to regulation, inhibited by magnesium ions. Functionally, RNA cytosine C(5)-methyltransferase that methylates cytosine to 5-methylcytosine (m5C) in various RNAs, such as tRNAs, mRNAs and some long non-coding RNAs (lncRNAs). Involved in various processes, such as epidermal stem cell differentiation, testis differentiation and maternal to zygotic transition during early development: acts by increasing protein synthesis; cytosine C(5)-methylation promoting tRNA stability and preventing mRNA decay. Methylates cytosine to 5-methylcytosine (m5C) at positions 34 and 48 of intron-containing tRNA(Leu)(CAA) precursors, and at positions 48, 49 and 50 of tRNA(Gly)(GCC) precursors. tRNA methylation is required generation of RNA fragments derived from tRNAs (tRFs). Also mediates C(5)-methylation of mitochondrial tRNAs. Catalyzes cytosine C(5)-methylation of mRNAs, leading to stabilize them and prevent mRNA decay: mRNA stabilization involves YBX1 that specifically recognizes and binds m5C-modified transcripts. Cytosine C(5)-methylation of mRNAs also regulates mRNA export: methylated transcripts are specifically recognized by THOC4/ALYREF, which mediates mRNA nucleo-cytoplasmic shuttling. Also mediates cytosine C(5)-methylation of non-coding RNAs, such as vault RNAs (vtRNAs), promoting their processing into regulatory small RNAs. Cytosine C(5)-methylation of vtRNA VTRNA1.1 promotes its processing into small-vault RNA4 (svRNA4) and regulates epidermal differentiation. May act downstream of Myc to regulate epidermal cell growth and proliferation. Required for proper spindle assembly and chromosome segregation, independently of its methyltransferase activity. In Homo sapiens (Human), this protein is RNA cytosine C(5)-methyltransferase NSUN2.